Reading from the N-terminus, the 1104-residue chain is DNA polymerase delta catalytic subunit (1104 aa).

The tract at residues 1 to 60 (MKRSIVTGGGNNDKKFKAQPPPKNNYRGGGDDEEDDEFEEDDDEDEGDEFGEEEDEDDID) is disordered. Over residues 31 to 60 (DDEEDDEFEEDDDEDEGDEFGEEEDEDDID) the composition is skewed to acidic residues. 4 residues coordinate Zn(2+): cysteine 1012, cysteine 1015, cysteine 1027, and cysteine 1030. Residues 1012 to 1030 (CMNCPKELTDTESTTCINC) form a CysA-type zinc finger. The [4Fe-4S] cluster site is built by cysteine 1059, cysteine 1062, cysteine 1072, and cysteine 1077. The short motif at 1059–1077 (CQRCSGSLHQPVLCSNRDC) is the CysB motif element.

The protein belongs to the DNA polymerase type-B family. As to quaternary structure, heterotetramer composed of subunits of 125 kDa, 50 kDa, 66 kDa and 12 kDa. The 125 kDa subunit contains the polymerase active site and most likely the active site for the 3'-5' exonuclease activity. Requires [4Fe-4S] cluster as cofactor.

It is found in the nucleus. It carries out the reaction DNA(n) + a 2'-deoxyribonucleoside 5'-triphosphate = DNA(n+1) + diphosphate. Possesses two enzymatic activities: DNA synthesis (polymerase) and an exonucleolytic activity that degrades single stranded DNA in the 3'- to 5'-direction. This is DNA polymerase delta catalytic subunit (pold1) from Dictyostelium discoideum (Social amoeba).